The sequence spans 110 residues: MGDDELAEIRRQRMMQMQQQQMAEQDQIQRQQQMQAQIQSVLMQVMEPEARERLNTIRLTKPEFAASVEQQIVSLAQSGRLRQKITDEQLRQLLTQIVPQKKEFNIRRVG.

Belongs to the PDCD5 family.

The polypeptide is DNA-binding protein Mlab_1482 (Methanocorpusculum labreanum (strain ATCC 43576 / DSM 4855 / Z)).